The primary structure comprises 373 residues: Centrosomal protein of 41 kDa (373 aa).

The disordered stretch occupies residues 89 to 137; that stretch reads QRLEDNDSAASDPDAETTARTNGKGNPGEQSPSPEQFINNAGAGDSSRS. Residues Ser-96 and Ser-99 each carry the phosphoserine modification. Over residues 106-127 the composition is skewed to polar residues; the sequence is TARTNGKGNPGEQSPSPEQFIN. Position 109 is a phosphothreonine (Thr-109). Residue Ser-121 is modified to Phosphoserine. One can recognise a Rhodanese domain in the interval 169–266; it reads PDCPFLLLDV…LAQKFPEGLI (98 aa). Residues 275–373 form a disordered region; the sequence is QQALPPGSAR…SGHLQGKPWK (99 aa). The span at 298–312 shows a compositional bias: basic and acidic residues; sequence NKWRFTPEDLKKIEY. An Omega-N-methylarginine modification is found at Arg-343. A compositionally biased stretch (polar residues) spans 355 to 366; it reads SHSNPRSLSSGH.

It belongs to the CEP41 family. In terms of assembly, found in a complex with TTLL6. Expressed in testis and fetal tissues.

The protein localises to the cytoplasm. The protein resides in the cytoskeleton. It localises to the microtubule organizing center. It is found in the centrosome. Its subcellular location is the cell projection. The protein localises to the cilium. The protein resides in the cilium basal body. Functionally, required during ciliogenesis for tubulin glutamylation in cilium. Probably acts by participating in the transport of TTLL6, a tubulin polyglutamylase, between the basal body and the cilium. This chain is Centrosomal protein of 41 kDa (CEP41), found in Homo sapiens (Human).